A 510-amino-acid polypeptide reads, in one-letter code: 2-isopropylmalate synthase (510 aa).

The region spanning 5-267 is the Pyruvate carboxyltransferase domain; that stretch reads LIIFDTTLRD…DTRIDSVHIV (263 aa). 4 residues coordinate Mn(2+): Asp14, His202, His204, and Asn238. The interval 392-510 is regulatory domain; that stretch reads KLLSLTAHSE…SKLERAHPQV (119 aa).

Belongs to the alpha-IPM synthase/homocitrate synthase family. LeuA type 1 subfamily. As to quaternary structure, homodimer. The cofactor is Mn(2+).

The protein resides in the cytoplasm. It catalyses the reaction 3-methyl-2-oxobutanoate + acetyl-CoA + H2O = (2S)-2-isopropylmalate + CoA + H(+). It functions in the pathway amino-acid biosynthesis; L-leucine biosynthesis; L-leucine from 3-methyl-2-oxobutanoate: step 1/4. In terms of biological role, catalyzes the condensation of the acetyl group of acetyl-CoA with 3-methyl-2-oxobutanoate (2-ketoisovalerate) to form 3-carboxy-3-hydroxy-4-methylpentanoate (2-isopropylmalate). This Nitrosospira multiformis (strain ATCC 25196 / NCIMB 11849 / C 71) protein is 2-isopropylmalate synthase.